The following is a 454-amino-acid chain: Bifunctional protein GlmU (454 aa).

Positions 1 to 228 (MTLPLHVVIL…PQDVEGANDP (228 aa)) are pyrophosphorylase. Residues 10 to 13 (LAAG), Lys-24, Gln-76, 81 to 82 (GT), 103 to 105 (YGD), Gly-138, Glu-153, Asn-168, and Asn-226 each bind UDP-N-acetyl-alpha-D-glucosamine. Position 105 (Asp-105) interacts with Mg(2+). Position 226 (Asn-226) interacts with Mg(2+). The interval 229–249 (WQLAQLERAWQLRAARALSLQ) is linker. Residues 250–454 (GVRMADPARV…IEGWERPTKK (205 aa)) are N-acetyltransferase. Residues Arg-332 and Lys-350 each contribute to the UDP-N-acetyl-alpha-D-glucosamine site. His-362 (proton acceptor) is an active-site residue. UDP-N-acetyl-alpha-D-glucosamine contacts are provided by Tyr-365 and Asn-376. Residues Ala-379, 385 to 386 (NY), Ser-404, Ala-422, and Arg-439 contribute to the acetyl-CoA site.

It in the N-terminal section; belongs to the N-acetylglucosamine-1-phosphate uridyltransferase family. The protein in the C-terminal section; belongs to the transferase hexapeptide repeat family. In terms of assembly, homotrimer. Mg(2+) serves as cofactor.

Its subcellular location is the cytoplasm. The catalysed reaction is alpha-D-glucosamine 1-phosphate + acetyl-CoA = N-acetyl-alpha-D-glucosamine 1-phosphate + CoA + H(+). It carries out the reaction N-acetyl-alpha-D-glucosamine 1-phosphate + UTP + H(+) = UDP-N-acetyl-alpha-D-glucosamine + diphosphate. The protein operates within nucleotide-sugar biosynthesis; UDP-N-acetyl-alpha-D-glucosamine biosynthesis; N-acetyl-alpha-D-glucosamine 1-phosphate from alpha-D-glucosamine 6-phosphate (route II): step 2/2. It participates in nucleotide-sugar biosynthesis; UDP-N-acetyl-alpha-D-glucosamine biosynthesis; UDP-N-acetyl-alpha-D-glucosamine from N-acetyl-alpha-D-glucosamine 1-phosphate: step 1/1. Its pathway is bacterial outer membrane biogenesis; LPS lipid A biosynthesis. Its function is as follows. Catalyzes the last two sequential reactions in the de novo biosynthetic pathway for UDP-N-acetylglucosamine (UDP-GlcNAc). The C-terminal domain catalyzes the transfer of acetyl group from acetyl coenzyme A to glucosamine-1-phosphate (GlcN-1-P) to produce N-acetylglucosamine-1-phosphate (GlcNAc-1-P), which is converted into UDP-GlcNAc by the transfer of uridine 5-monophosphate (from uridine 5-triphosphate), a reaction catalyzed by the N-terminal domain. In Xanthomonas oryzae pv. oryzae (strain MAFF 311018), this protein is Bifunctional protein GlmU.